The chain runs to 123 residues: Small ribosomal subunit protein uS12cz/uS12cy (123 aa).

It belongs to the universal ribosomal protein uS12 family. In terms of assembly, part of the 30S ribosomal subunit.

It localises to the plastid. The protein resides in the chloroplast. In terms of biological role, with S4 and S5 plays an important role in translational accuracy. Located at the interface of the 30S and 50S subunits. This chain is Small ribosomal subunit protein uS12cz/uS12cy (rps12-A), found in Nymphaea alba (White water-lily).